Consider the following 1388-residue polypeptide: Endoribonuclease Dicer homolog 2 (1388 aa).

The region spanning 31–210 (ALEKAIKQNT…DSYWKKIHEL (180 aa)) is the Helicase ATP-binding domain. 44–51 (LETGSGKT) is a binding site for ATP. Positions 152-155 (DECH) match the DECH box motif. Positions 380-544 (LGYSSLENIR…PLPDDSDEPL (165 aa)) constitute a Helicase C-terminal domain. Positions 559–645 (SVSLIYHYCS…VPDMVVAETV (87 aa)) constitute a Dicer dsRNA-binding fold domain. A PAZ domain is found at 805 to 935 (TSHEVLEKHE…LPPELCHVIL (131 aa)). 2 consecutive RNase III domains span residues 962–1113 (AYNL…SEGG) and 1149–1296 (VGYM…VDSG). Residues Glu-1188, Asp-1282, and Glu-1285 each coordinate Mg(2+). Residues 1315–1384 (TPETVKLHPV…YKEVLNLLKN (70 aa)) enclose the DRBM domain.

This sequence belongs to the helicase family. Dicer subfamily. Mg(2+) is required as a cofactor. It depends on Mn(2+) as a cofactor.

The protein resides in the nucleus. Its subcellular location is the cytoplasm. In terms of biological role, ribonuclease (RNase) III involved in RNA-mediated post-transcriptional gene silencing (PTGS). Involved in the processing of natural small interfering RNAs (nat-siRNAs, derived from cis-natural antisense transcripts) by cleaving small dsRNAs into 24 nucleotide nat-siRNAs. Plays an essential role in transitive silencing of transgenes by processing secondary siRNAs. This pathway, which requires DCL4 and RDR6, amplifies silencing by using the target RNA as substrate to generate secondary siRNAs, providing an efficient mechanism for long-distance silencing. May participate with DCL3 in the production of 24 nucleotide repeat-associated siRNAs (ra-siRNAs) which derive from heterochromatin and DNA repeats such as transposons. Plays a role in antiviral RNA silencing. Involved in the production of viral siRNAs derived from the turnip crinkle virus (TCV) and tobacco rattle virus (TRV). Targeted by the viral silencing suppressor (VSR) protein 2b of the cucumber mosaic virus (CMV) that inactivates DCL2 function in RNA silencing. Does not seem to be involved in microRNAs (miRNAs) processing. The sequence is that of Endoribonuclease Dicer homolog 2 from Arabidopsis thaliana (Mouse-ear cress).